Consider the following 77-residue polypeptide: MNRTKLVLGAVILGSHSAGCSSNAKIDQLSSDVQTLNAKVDQLSNDVNAMRSDVQAAKDDAARANQRLDNQAHAYKK.

An N-terminal signal peptide occupies residues 1-19 (MNRTKLVLGAVILGSHSAG). Cys-20 carries the N-palmitoyl cysteine lipid modification. The S-diacylglycerol cysteine moiety is linked to residue Cys-20. 2 repeats span residues 23 to 33 (NAKIDQLSSDV) and 37 to 47 (NAKVDQLSNDV). Residues 26-74 (IDQLSSDVQTLNAKVDQLSNDVNAMRSDVQAAKDDAARANQRLDNQAHA) are a coiled coil. Positions 56 to 77 (AAKDDAARANQRLDNQAHAYKK) are disordered. Lys-77 carries the N6-murein peptidoglycan lysine modification.

This sequence belongs to the Lpp family. In terms of assembly, homotrimer.

It localises to the cell outer membrane. Its subcellular location is the secreted. It is found in the cell wall. A highly abundant outer membrane lipoprotein that controls the distance between the inner and outer membranes. The only protein known to be covalently linked to the peptidoglycan network (PGN). Also non-covalently binds the PGN. The link between the cell outer membrane and PGN contributes to maintenance of the structural and functional integrity of the cell envelope, and maintains the correct distance between the PGN and the outer membrane. This chain is Major outer membrane lipoprotein Lpp, found in Serratia marcescens.